The primary structure comprises 326 residues: Phospho-N-acetylmuramoyl-pentapeptide-transferase (326 aa).

9 helical membrane-spanning segments follow: residues 3 to 23 (ISIS…PAFI), 51 to 71 (TMGG…VALF), 79 to 99 (VGMI…DDFL), 115 to 135 (LALQ…GGDM), 138 to 158 (IFGY…FWLV), 169 to 189 (GIDG…GVIA), 195 to 215 (MDIL…FVFN), 221 to 243 (VFMG…MALH), and 304 to 324 (VDFF…AILY).

This sequence belongs to the glycosyltransferase 4 family. MraY subfamily. Requires Mg(2+) as cofactor.

It localises to the cell membrane. The catalysed reaction is UDP-N-acetyl-alpha-D-muramoyl-L-alanyl-gamma-D-glutamyl-L-lysyl-D-alanyl-D-alanine + di-trans,octa-cis-undecaprenyl phosphate = Mur2Ac(oyl-L-Ala-gamma-D-Glu-L-Lys-D-Ala-D-Ala)-di-trans,octa-cis-undecaprenyl diphosphate + UMP. It participates in cell wall biogenesis; peptidoglycan biosynthesis. Functionally, catalyzes the initial step of the lipid cycle reactions in the biosynthesis of the cell wall peptidoglycan: transfers peptidoglycan precursor phospho-MurNAc-pentapeptide from UDP-MurNAc-pentapeptide onto the lipid carrier undecaprenyl phosphate, yielding undecaprenyl-pyrophosphoryl-MurNAc-pentapeptide, known as lipid I. This Streptococcus pneumoniae (strain Hungary19A-6) protein is Phospho-N-acetylmuramoyl-pentapeptide-transferase.